The following is a 321-amino-acid chain: Mitochondrial thiamine pyrophosphate carrier 1 (321 aa).

6 consecutive transmembrane segments (helical) span residues glycine 12–serine 28, leucine 91–threonine 107, phenylalanine 126–leucine 146, alanine 184–tyrosine 200, alanine 221–leucine 237, and glycine 284–tryptophan 301. Solcar repeat units lie at residues glycine 12–alanine 110, proline 120–proline 206, and proline 214–leucine 309.

The protein belongs to the mitochondrial carrier (TC 2.A.29) family.

It is found in the mitochondrion inner membrane. Mitochondrial transporter that mediates uptake of thiamine pyrophosphate (ThPP) into mitochondria. The chain is Mitochondrial thiamine pyrophosphate carrier 1 (tpc1) from Aspergillus niger (strain ATCC MYA-4892 / CBS 513.88 / FGSC A1513).